A 548-amino-acid chain; its full sequence is Nonribosomal peptide synthetase 8 (548 aa).

One can recognise a Carrier domain in the interval 1–77; it reads MNSLDQWRDT…QLRGENRSGP (77 aa). Serine 35 is subject to O-(pantetheine 4'-phosphoryl)serine. Positions 122-537 are condensation; sequence MAPISSIQEF…FKSLIAELAA (416 aa).

It belongs to the NRP synthetase family.

The protein operates within mycotoxin biosynthesis. Nonribosomal peptide synthetase; part of the gene cluster that mediates the biosynthesis of fumonisins B1 (FB1), B2 (FB2), B3 (FB3), and B4 (FB4), which are carcinogenic mycotoxins. Within the pathway FUM14 catalyzes esterification of CoA-activated tricarballylic acid to the C-14 and C-15 hydroxyls of the fumonisin backbone. The biosynthesis starts with the FUM1-catalyzed carbon chain assembly from one molecule of acetyl-CoA, eight molecules of malonyl-CoA, and two molecules of methionine (in S-adenosyl form). The C18 polyketide chain is released from the enzyme by a nucleophilic attack of a carbanion, which is derived from R-carbon of alanine by decarboxylation, on the carbonyl carbon of polyketide acyl chain. This step is catalyzed by the pyridoxal 5'-phosphate-dependent aminoacyl transferase FUM8. The resultant 3-keto intermediate is then stereospecifically reduced to a 3-hydroxyl product by reductase FUM13. Subsequent oxidations at C-10 by the cytochrome P450 monooxygenase FUM2, C-14 and C-15 by FUM6, FUM12 or FUM15, tricarballylic esterification of the hydroxyl groups on C-14 and C-15 by acyltransferase FUM14, and C-5 hydroxylation by 2-keto-glutarate-dependent dioxygenase FUM3 furnish the biosynthesis of fumonisins. The tricarballylic moieties are most likely derived from the citric acid cycle, and their addition to the carbon backbone may involve FUM7, FUM10, FUM11 and FUM14. This Gibberella moniliformis (strain M3125 / FGSC 7600) (Maize ear and stalk rot fungus) protein is Nonribosomal peptide synthetase 8.